A 162-amino-acid chain; its full sequence is MATIFFIQPITEEAEAYYPPSMITNKRKDLGVDVYCCSNLVLQPGLNIIPLHIKVACEHMGKKCGFKIMARSSMCTHERLLILANGIGLIDPGYVGELMLKIINLGDIPVQIWAKECLVQLVAQGDHVPDHINILKRNEIFPLFAPTPRGEGRFGSTGKAGL.

Belongs to the dUTPase family. Homotrimer. Requires Mg(2+) as cofactor.

Its subcellular location is the host cytoplasm. It is found in the virion. The enzyme catalyses dUTP + H2O = dUMP + diphosphate + H(+). The viral dUTPase may play a role in lowering the dUTP concentration in natural infections to minimize misincorporation of deoxyuridine into the viral DNA and ensure the fidelity of genome replication. The sequence is that of Deoxyuridine 5'-triphosphate nucleotidohydrolase from Ornithodoros (relapsing fever ticks).